The sequence spans 239 residues: Ribosome assembly factor mrt4 (239 aa).

This sequence belongs to the universal ribosomal protein uL10 family. In terms of assembly, associates with the pre-60S ribosomal particle.

The protein resides in the nucleus. The protein localises to the nucleolus. Its subcellular location is the cytoplasm. In terms of biological role, component of the ribosome assembly machinery. Nuclear paralog of the ribosomal protein P0, it binds pre-60S subunits at an early stage of assembly in the nucleolus, and is replaced by P0 in cytoplasmic pre-60S subunits and mature 80S ribosomes. This is Ribosome assembly factor mrt4 from Candida glabrata (strain ATCC 2001 / BCRC 20586 / JCM 3761 / NBRC 0622 / NRRL Y-65 / CBS 138) (Yeast).